The primary structure comprises 206 residues: Small ribosomal subunit protein uS4 (206 aa).

One can recognise an S4 RNA-binding domain in the interval 96–156 (GRLDNVVYRM…EKAKKQSRVK (61 aa)).

Belongs to the universal ribosomal protein uS4 family. As to quaternary structure, part of the 30S ribosomal subunit. Contacts protein S5. The interaction surface between S4 and S5 is involved in control of translational fidelity.

One of the primary rRNA binding proteins, it binds directly to 16S rRNA where it nucleates assembly of the body of the 30S subunit. Its function is as follows. With S5 and S12 plays an important role in translational accuracy. The protein is Small ribosomal subunit protein uS4 of Salmonella agona (strain SL483).